A 530-amino-acid polypeptide reads, in one-letter code: tRNA-2-methylthio-N(6)-dimethylallyladenosine synthase (530 aa).

Residues 19–134 form the MTTase N-terminal domain; that stretch reads RTYEVRTYGC…LPTLLERARH (116 aa). [4Fe-4S] cluster contacts are provided by C28, C63, C97, C171, C175, and C178. The Radical SAM core domain occupies 157-387; the sequence is RDEIASGWVS…TALQERISHE (231 aa). In terms of domain architecture, TRAM spans 390–460; it reads QRVVGRTVEV…PFHLIADSVD (71 aa). Positions 509–530 are disordered; sequence VPTTASTSAPVGDGSAHPRHRA.

Belongs to the methylthiotransferase family. MiaB subfamily. As to quaternary structure, monomer. [4Fe-4S] cluster serves as cofactor.

It localises to the cytoplasm. The catalysed reaction is N(6)-dimethylallyladenosine(37) in tRNA + (sulfur carrier)-SH + AH2 + 2 S-adenosyl-L-methionine = 2-methylsulfanyl-N(6)-dimethylallyladenosine(37) in tRNA + (sulfur carrier)-H + 5'-deoxyadenosine + L-methionine + A + S-adenosyl-L-homocysteine + 2 H(+). Its function is as follows. Catalyzes the methylthiolation of N6-(dimethylallyl)adenosine (i(6)A), leading to the formation of 2-methylthio-N6-(dimethylallyl)adenosine (ms(2)i(6)A) at position 37 in tRNAs that read codons beginning with uridine. In Clavibacter sepedonicus (Clavibacter michiganensis subsp. sepedonicus), this protein is tRNA-2-methylthio-N(6)-dimethylallyladenosine synthase.